A 633-amino-acid chain; its full sequence is Probable potassium transport system protein Kup 2 (633 aa).

The next 12 membrane-spanning stretches (helical) occupy residues 18-38 (FLAM…TSPL), 61-81 (LISL…VLFL), 109-129 (LMFM…MITP), 145-165 (PAFH…LFAV), 173-193 (VSIF…AAGV), 211-231 (AVTF…AVFL), 255-275 (WFAV…ALVL), 287-307 (LMFP…ATII), 345-365 (IYLP…MFMF), 371-391 (LATA…VLAF), 405-425 (ATAV…ANLF), and 427-447 (IHDG…TMWT).

This sequence belongs to the HAK/KUP transporter (TC 2.A.72) family.

It is found in the cell inner membrane. It carries out the reaction K(+)(in) + H(+)(in) = K(+)(out) + H(+)(out). Transport of potassium into the cell. Likely operates as a K(+):H(+) symporter. This is Probable potassium transport system protein Kup 2 from Sinorhizobium medicae (strain WSM419) (Ensifer medicae).